Consider the following 447-residue polypeptide: UDP-N-acetylmuramate--L-alanine ligase (447 aa).

108–114 (GSHGKTS) contacts ATP.

The protein belongs to the MurCDEF family.

Its subcellular location is the cytoplasm. It carries out the reaction UDP-N-acetyl-alpha-D-muramate + L-alanine + ATP = UDP-N-acetyl-alpha-D-muramoyl-L-alanine + ADP + phosphate + H(+). It participates in cell wall biogenesis; peptidoglycan biosynthesis. Functionally, cell wall formation. The protein is UDP-N-acetylmuramate--L-alanine ligase of Listeria monocytogenes serotype 4b (strain F2365).